A 492-amino-acid polypeptide reads, in one-letter code: 2-succinylbenzoate--CoA ligase (492 aa).

It belongs to the ATP-dependent AMP-binding enzyme family. MenE subfamily.

The enzyme catalyses 2-succinylbenzoate + ATP + CoA = 2-succinylbenzoyl-CoA + AMP + diphosphate. The protein operates within quinol/quinone metabolism; 1,4-dihydroxy-2-naphthoate biosynthesis; 1,4-dihydroxy-2-naphthoate from chorismate: step 5/7. It functions in the pathway quinol/quinone metabolism; menaquinone biosynthesis. Converts 2-succinylbenzoate (OSB) to 2-succinylbenzoyl-CoA (OSB-CoA). The protein is 2-succinylbenzoate--CoA ligase of Staphylococcus aureus (strain Mu3 / ATCC 700698).